The following is a 29-amino-acid chain: Cytochrome b6-f complex subunit 8 (29 aa).

A helical transmembrane segment spans residues isoleucine 3–valine 23.

It belongs to the PetN family. As to quaternary structure, the 4 large subunits of the cytochrome b6-f complex are cytochrome b6, subunit IV (17 kDa polypeptide, PetD), cytochrome f and the Rieske protein, while the 4 small subunits are PetG, PetL, PetM and PetN. The complex functions as a dimer.

It localises to the plastid. It is found in the chloroplast thylakoid membrane. In terms of biological role, component of the cytochrome b6-f complex, which mediates electron transfer between photosystem II (PSII) and photosystem I (PSI), cyclic electron flow around PSI, and state transitions. The chain is Cytochrome b6-f complex subunit 8 from Arabis hirsuta (Hairy rock-cress).